The sequence spans 1288 residues: Probable serine/threonine-protein kinase drkD (1288 aa).

The segment covering 1 to 12 (MEGSFQFNKSKQ) has biased composition (polar residues). Disordered regions lie at residues 1–132 (MEGS…QYHP), 156–223 (FNVS…PEEI), and 269–386 (SFGH…DDEE). Composition is skewed to low complexity over residues 13–79 (TNNN…NSTS) and 156–220 (FNVS…QQQP). Positions 221–248 (EEIEGELNRERQERDKMLHEEAEIEQYK) form a coiled coil. Residues 271–291 (GHITSANSDETTNNESGSPIN) show a composition bias toward polar residues. The span at 302-343 (PHSSHNEDHQSDQDNHGQFMNDEHQSTDDDQNKSDNEKESES) shows a compositional bias: basic and acidic residues. The segment covering 344–354 (ARNSGDLQQKV) has biased composition (polar residues). Positions 376–386 (EGEEEDDDDEE) are enriched in acidic residues. LRR repeat units lie at residues 400–421 (KSTK…VWSI), 423–444 (ELRD…IGLL), 446–468 (HLKR…YSLP), 469–490 (RLTT…INRL), 492–513 (SLKT…TNLH), 517–538 (NLVE…MLES), and 540–561 (HLQV…LKKS). 3 disordered regions span residues 690–717 (WDQQ…VLTG), 733–764 (PTQQ…QQQQ), and 796–825 (QQQQ…KDHQ). Composition is skewed to polar residues over residues 701–717 (SPNV…VLTG) and 733–757 (PTQQ…HNNN). The region spanning 851–1104 (IAIGARIGRG…EILPIMEGMI (254 aa)) is the Protein kinase domain. Residues 857-865 (IGRGGYGQV) and lysine 878 contribute to the ATP site. Aspartate 974 (proton acceptor) is an active-site residue. Disordered stretches follow at residues 1118–1141 (GRPI…QNMA) and 1245–1288 (QQQL…NDKK). The span at 1257–1268 (NRLNYNFNNSNN) shows a compositional bias: low complexity. Positions 1269-1282 (SDIQPMQQENNYRM) are enriched in polar residues.

This sequence belongs to the protein kinase superfamily. TKL Ser/Thr protein kinase family.

The enzyme catalyses L-seryl-[protein] + ATP = O-phospho-L-seryl-[protein] + ADP + H(+). It catalyses the reaction L-threonyl-[protein] + ATP = O-phospho-L-threonyl-[protein] + ADP + H(+). This is Probable serine/threonine-protein kinase drkD (drkD) from Dictyostelium discoideum (Social amoeba).